A 451-amino-acid polypeptide reads, in one-letter code: FAD-dependent monooxygenase adrH (451 aa).

Residues Glu-39, Gly-53, and Arg-112 each contribute to the FAD site. Tyr-196 is a catalytic residue. Residues Asp-288 and Ala-301 each coordinate FAD. Asn-385 carries N-linked (GlcNAc...) asparagine glycosylation. The chain crosses the membrane as a helical span at residues 426–446 (TLLWVSSLALFLFFPWLGSYL).

This sequence belongs to the paxM FAD-dependent monooxygenase family. FAD is required as a cofactor.

The protein localises to the membrane. It participates in secondary metabolite biosynthesis; terpenoid biosynthesis. In terms of biological role, FAD-dependent monooxygenase; part of the gene cluster that mediates the biosynthesis of andrastins, meroterpenoid compounds that exhibit inhibitory activity against ras farnesyltransferase, suggesting that they could be promising leads for antitumor agents. The first step of the pathway is the synthesis of 3,5-dimethylorsellinic acid (DMOA) by the polyketide synthase adrD via condensation of one acetyl-CoA starter unit with 3 malonyl-CoA units and 2 methylations. DMAO is then converted to farnesyl-DMAO by the prenyltransferase adrG. The methyltransferase adrK catalyzes the methylation of the carboxyl group of farnesyl-DMAO to farnesyl-DMAO methyl ester which is further converted to epoxyfarnesyl-DMAO methyl ester by the FAD-dependent monooxygenase adrH. The terpene cyclase adrI then catalyzes the carbon skeletal rearrangement to generate the andrastin E, the first compound in the pathway having the andrastin scaffold, with the tetracyclic ring system. The post-cyclization tailoring enzymes adrF, adrE, adrJ, and adrA, are involved in the conversion of andrastin E into andrastin A. The short chain dehydrogenase adrF is responsible for the oxidation of the C-3 a hydroxyl group of andrastin E to yield the corresponding ketone, andrastin D. The ketoreductase adrE stereoselectively reduces the carbonyl moiety to reverse the stereochemistry of the C-3 position to yield andrastin F. The acetyltransferase adrJ is the acetyltransferase that attaches the acetyl group to the C-3 hydroxyl group of andrastin F to yield andrastin C. Finally, the cytochrome P450 monooxygenase adrA catalyzes two sequential oxidation reactions of the C-23 methyl group, to generate the corresponding alcohol andrastin B, and aldehyde andrastin A. This Penicillium rubens (strain ATCC 28089 / DSM 1075 / NRRL 1951 / Wisconsin 54-1255) (Penicillium chrysogenum) protein is FAD-dependent monooxygenase adrH.